The chain runs to 102 residues: ATP-dependent Clp protease adapter protein ClpS (102 aa).

It belongs to the ClpS family. In terms of assembly, binds to the N-terminal domain of the chaperone ClpA.

In terms of biological role, involved in the modulation of the specificity of the ClpAP-mediated ATP-dependent protein degradation. The polypeptide is ATP-dependent Clp protease adapter protein ClpS (Wolinella succinogenes (strain ATCC 29543 / DSM 1740 / CCUG 13145 / JCM 31913 / LMG 7466 / NCTC 11488 / FDC 602W) (Vibrio succinogenes)).